The chain runs to 116 residues: CDKN2AIP N-terminal-like protein (116 aa).

Methionine 1 bears the N-acetylmethionine mark. The XRN2-binding (XTBD) domain maps to 24–116 (AEQFRSYSES…RSELMKKHQS (93 aa)).

This sequence belongs to the CARF family. As to quaternary structure, interacts with XRN2; the interaction is direct.

The chain is CDKN2AIP N-terminal-like protein (CDKN2AIPNL) from Homo sapiens (Human).